The chain runs to 337 residues: Peptide methionine sulfoxide reductase MsrA/MsrB (337 aa).

The tract at residues 28 to 181 (KDIYLAGGCF…PGGYCHVDLS (154 aa)) is peptide methionine sulfoxide reductase A. Cys36 is a catalytic residue. The MsrB domain occupies 198 to 321 (KDELKAKLSD…NGASLKFIPL (124 aa)). The active-site Nucleophile is the Cys310.

It in the N-terminal section; belongs to the MsrA Met sulfoxide reductase family. In the C-terminal section; belongs to the MsrB Met sulfoxide reductase family.

It catalyses the reaction L-methionyl-[protein] + [thioredoxin]-disulfide + H2O = L-methionyl-(S)-S-oxide-[protein] + [thioredoxin]-dithiol. The enzyme catalyses [thioredoxin]-disulfide + L-methionine + H2O = L-methionine (S)-S-oxide + [thioredoxin]-dithiol. The catalysed reaction is L-methionyl-[protein] + [thioredoxin]-disulfide + H2O = L-methionyl-(R)-S-oxide-[protein] + [thioredoxin]-dithiol. Functionally, has an important function as a repair enzyme for proteins that have been inactivated by oxidation. Catalyzes the reversible oxidation-reduction of methionine sulfoxide in proteins to methionine. This chain is Peptide methionine sulfoxide reductase MsrA/MsrB (msrAB), found in Campylobacter fetus.